The primary structure comprises 51 residues: Large ribosomal subunit protein eL39 (51 aa).

Positions 1 to 22 (MPSQKSFRTKQKLAKAQKQNRP) are disordered.

The protein belongs to the eukaryotic ribosomal protein eL39 family. Interacts with YIH1.

The polypeptide is Large ribosomal subunit protein eL39 (RPL39) (Debaryomyces hansenii (strain ATCC 36239 / CBS 767 / BCRC 21394 / JCM 1990 / NBRC 0083 / IGC 2968) (Yeast)).